Here is a 155-residue protein sequence, read N- to C-terminus: Small ribosomal subunit protein uS7cz/uS7cy (155 aa).

It belongs to the universal ribosomal protein uS7 family. In terms of assembly, part of the 30S ribosomal subunit.

It localises to the plastid. Its subcellular location is the chloroplast. One of the primary rRNA binding proteins, it binds directly to 16S rRNA where it nucleates assembly of the head domain of the 30S subunit. This chain is Small ribosomal subunit protein uS7cz/uS7cy (rps7-A), found in Lactuca sativa (Garden lettuce).